A 1017-amino-acid chain; its full sequence is EMILIN-1 (1017 aa).

The signal sequence occupies residues 1–21 (MAPRALWSCYLCCLLTIATEA). An EMI domain is found at 56-133 (HRNWCAYVVT…QGYGGDDCGE (78 aa)). 3 disulfide bridges follow: Cys60–Cys123, Cys87–Cys94, and Cys122–Cys131. Disordered stretches follow at residues 134–180 (GPAS…SEKV) and 259–289 (ELGHLNNHHNGGPGGGGRASGPVPVPSGPSE). Over residues 154–167 (RPNLSGSSAGSHLS) the composition is skewed to low complexity. An N-linked (GlcNAc...) asparagine glycan is attached at Asn156. Coiled coils occupy residues 171–211 (GEGP…LAED), 237–266 (ETLSEIQQQLQLLDNRVSTHDQELGHLNNH), and 310–374 (LDGF…DVVT). The tract at residues 383–403 (RRGSELGGAAGQGGHPPGYTS) is disordered. A compositionally biased stretch (gly residues) spans 387–398 (ELGGAAGQGGHP). 4 N-linked (GlcNAc...) asparagine glycosylation sites follow: Asn416, Asn456, Asn562, and Asn659. Residues 519–573 (LHEAEAAGEAQQAVLEGLQGLLSRLRERMDAQEETAAEILLRLNLTAAQLSQLEG) adopt a coiled-coil conformation. Residues 676–697 (LADLGATKDSIISEINRLQQEA) are a coiled coil. Asn767 and Asn795 each carry an N-linked (GlcNAc...) asparagine glycan. A coiled-coil region spans residues 789 to 809 (RRLGALNNSLLLLEDRLQQLS). Positions 811–820 (KDFTGPSGKA) are enriched in low complexity. The disordered stretch occupies residues 811 to 866 (KDFTGPSGKAGPPGPPGLQGPSGPAGPPGPPGKDGQQGAIGPPGPQGEQGAEGAPA). Residues 815-865 (GPSGKAGPPGPPGLQGPSGPAGPPGPPGKDGQQGAIGPPGPQGEQGAEGAP) form the Collagen-like domain. Over residues 822 to 841 (PPGPPGLQGPSGPAGPPGPP) the composition is skewed to pro residues. Residues 843–866 (KDGQQGAIGPPGPQGEQGAEGAPA) show a composition bias toward low complexity. The C1q domain maps to 867 to 1014 (APVPRVAFSA…GALLYEDTEL (148 aa)).

In terms of assembly, homotrimer associated through a moderately stable interaction of the C-terminal globular C1q domains, allowing the nucleation of the triple helix and then a further quaternary assembly to higher-order polymers via intermolecular disulfide bonds. Interacts with EMILIN2. Interacts with EFEMP2; this interaction promotes the incorporation of EFEMP2 into the extracellular matrix.

Its subcellular location is the secreted. It localises to the extracellular space. The protein localises to the extracellular matrix. Its function is as follows. Involved in elastic and collagen fibers formation. It is required for EFEMP2 deposition into the extracellular matrix, and collagen network assembly and cross-linking via protein-lysine 6-oxidase/LOX activity. May be responsible for anchoring smooth muscle cells to elastic fibers, and may be involved the processes that regulate vessel assembly. Has cell adhesive capacity. May have a function in placenta formation and initial organogenesis and a later role in interstitial connective tissue. The polypeptide is EMILIN-1 (Emilin1) (Mus musculus (Mouse)).